Here is a 126-residue protein sequence, read N- to C-terminus: Probable V-type proton ATPase subunit G (126 aa).

The tract at residues 23–45 is disordered; that stretch reads NEARKRKLQRTKQAKQEAQAEVE. Positions 26–35 are enriched in basic residues; that stretch reads RKRKLQRTKQ.

The protein belongs to the V-ATPase G subunit family. In terms of assembly, V-ATPase is a heteromultimeric enzyme made up of two complexes: the ATP-hydrolytic V1 complex and the proton translocation V0 complex. The V1 complex consists of three catalytic AB heterodimers that form a heterohexamer, three peripheral stalks each consisting of EG heterodimers, one central rotor including subunits D and F, and the regulatory subunits C and H. The proton translocation complex V0 consists of the proton transport subunit a, a ring of proteolipid subunits c9c'', rotary subunit d, subunits e and f, and the accessory subunits vah-19/Ac45 and vah-20/PRR.

Its function is as follows. Subunit of the V1 complex of vacuolar(H+)-ATPase (V-ATPase), a multisubunit enzyme composed of a peripheral complex (V1) that hydrolyzes ATP and a membrane integral complex (V0) that translocates protons. V-ATPase is responsible for acidifying and maintaining the pH of intracellular compartments and in some cell types, is targeted to the plasma membrane, where it is responsible for acidifying the extracellular environment. In neurons, required for necrotic cell death by promoting intracellular acidification. The polypeptide is Probable V-type proton ATPase subunit G (Caenorhabditis briggsae).